The sequence spans 417 residues: UDP-N-acetylglucosamine 1-carboxyvinyltransferase (417 aa).

Residue 22–23 coordinates phosphoenolpyruvate; it reads KN. Arginine 91 contacts UDP-N-acetyl-alpha-D-glucosamine. Cysteine 115 (proton donor) is an active-site residue. Cysteine 115 is subject to 2-(S-cysteinyl)pyruvic acid O-phosphothioketal. UDP-N-acetyl-alpha-D-glucosamine is bound by residues 120-124, aspartate 304, and isoleucine 326; that span reads RPVDL.

The protein belongs to the EPSP synthase family. MurA subfamily.

The protein resides in the cytoplasm. It carries out the reaction phosphoenolpyruvate + UDP-N-acetyl-alpha-D-glucosamine = UDP-N-acetyl-3-O-(1-carboxyvinyl)-alpha-D-glucosamine + phosphate. It functions in the pathway cell wall biogenesis; peptidoglycan biosynthesis. Functionally, cell wall formation. Adds enolpyruvyl to UDP-N-acetylglucosamine. This chain is UDP-N-acetylglucosamine 1-carboxyvinyltransferase, found in Nitratidesulfovibrio vulgaris (strain ATCC 29579 / DSM 644 / CCUG 34227 / NCIMB 8303 / VKM B-1760 / Hildenborough) (Desulfovibrio vulgaris).